The sequence spans 287 residues: Glycine--tRNA ligase alpha subunit (287 aa).

It belongs to the class-II aminoacyl-tRNA synthetase family. As to quaternary structure, tetramer of two alpha and two beta subunits.

The protein localises to the cytoplasm. It catalyses the reaction tRNA(Gly) + glycine + ATP = glycyl-tRNA(Gly) + AMP + diphosphate. The protein is Glycine--tRNA ligase alpha subunit of Campylobacter jejuni (strain RM1221).